Consider the following 557-residue polypeptide: Selenoprotein N (557 aa).

Residues 1–21 show a composition bias toward basic and acidic residues; it reads MAADVDKTPAGEQKDDHEDRG. The segment at 1-28 is disordered; sequence MAADVDKTPAGEQKDDHEDRGTPSSRRG. A helical transmembrane segment spans residues 35 to 55; the sequence is ISSLFIIAAIPVIGVCIKYYL. A non-standard amino acid (selenocysteine) is located at residue U430. Residues N451 and N499 are each glycosylated (N-linked (GlcNAc...) asparagine).

In terms of assembly, interacts with ryr3.

It is found in the endoplasmic reticulum membrane. Plays an important role in cell protection against oxidative stress and in the regulation of redox-related calcium homeostasis. Regulates the calcium level of the ER by protecting the calcium pump ATP2A2 against the oxidoreductase ERO1A-mediated oxidative damage. Acts as a modulator of ryanodine receptor (RyR) activity: protects RyR from oxidation due to increased oxidative stress, or directly controls the RyR redox state, regulating the RyR-mediated calcium mobilization required for normal muscle development and differentiation. Plays an important role in muscle development and differentiation during early development. Required for development of the slow muscle fiber lineage. Required for the correct organization and attachment of the myofibrils, as well as for the continuity and integrity of the connective tissue that forms the myoseptum. The protein is Selenoprotein N of Danio rerio (Zebrafish).